Reading from the N-terminus, the 1032-residue chain is Probable ATP-dependent RNA helicase DDX46 (1032 aa).

Positions 1–24 (MGRESRHYRKRSASRGRSGSRSRS) are enriched in basic residues. Residues 1-227 (MGRESRHYRK…TEMEDEELDP (227 aa)) form a disordered region. G2 carries the N-myristoyl glycine lipid modification. The span at 26 to 49 (SPSDKRSKRGDDRRSRSRDRDRRR) shows a compositional bias: basic and acidic residues. 2 stretches are compositionally biased toward basic residues: residues 50 to 73 (ERSRSRDKRRSRSRDRKRLRRSRS) and 81 to 103 (ERRRSRSRDRRRSRSRSRGRRSR). Residues 112–200 (KKTENRSRSK…EMKQGKKWSL (89 aa)) are compositionally biased toward basic and acidic residues. Residues 152–197 (DQNKLEEEMRKRKERVEKWREEQRKKAMENIGELKKEIEEMKQGKK) are a coiled coil. A Glycyl lysine isopeptide (Lys-Gly) (interchain with G-Cter in SUMO2) cross-link involves residue K186. Residue S199 is modified to Phosphoserine. A compositionally biased stretch (acidic residues) spans 201 to 211 (EDDDDDEDDPA). K263 is subject to N6-acetyllysine. At Y294 the chain carries Phosphotyrosine. Phosphoserine occurs at positions 295 and 296. K325 is covalently cross-linked (Glycyl lysine isopeptide (Lys-Gly) (interchain with G-Cter in SUMO2)). S346 is subject to Phosphoserine. The short motif at 372–400 (KSWVQCGISMKILNSLKKHGYEKPTPIQT) is the Q motif element. Positions 403–581 (IPAIMSGRDL…RRILSKPIEV (179 aa)) constitute a Helicase ATP-binding domain. ATP is bound at residue 416 to 423 (AKTGSGKT). The DEAD box signature appears at 529–532 (DEAD). Residues 592 to 753 (DVEQQVIVIE…AVPPDLEKLW (162 aa)) enclose the Helicase C-terminal domain. Residue K776 is modified to N6-acetyllysine. K779 is covalently cross-linked (Glycyl lysine isopeptide (Lys-Gly) (interchain with G-Cter in SUMO2)). S804 bears the Phosphoserine mark. The residue at position 904 (K904) is an N6-acetyllysine. Residues K908 and K916 each participate in a glycyl lysine isopeptide (Lys-Gly) (interchain with G-Cter in SUMO2) cross-link. The residue at position 929 (S929) is a Phosphoserine.

This sequence belongs to the DEAD box helicase family. DDX46/PRP5 subfamily. As to quaternary structure, component of the 17S U2 SnRNP complex, a ribonucleoprotein complex that contains small nuclear RNA (snRNA) U2 and a number of specific proteins. Within the 17S U2 SnRNP complex, DDX46 is part of the SF3B subcomplex, which is required for 'A' complex assembly formed by the stable binding of U2 snRNP to the branchpoint sequence in pre-mRNA. Recruited to the 17S U2 SnRNP complex following release of DDX42; DDX42 and DDX46 bind the SF3B subcomplex in a competitive manner.

The protein localises to the nucleus speckle. The protein resides in the nucleus. It localises to the cajal body. The enzyme catalyses ATP + H2O = ADP + phosphate + H(+). Its function is as follows. Component of the 17S U2 SnRNP complex of the spliceosome, a large ribonucleoprotein complex that removes introns from transcribed pre-mRNAs. The 17S U2 SnRNP complex (1) directly participates in early spliceosome assembly and (2) mediates recognition of the intron branch site during pre-mRNA splicing by promoting the selection of the pre-mRNA branch-site adenosine, the nucleophile for the first step of splicing. Within the 17S U2 SnRNP complex, DDX46 plays essential roles during assembly of pre-spliceosome and proofreading of the branch site. This is Probable ATP-dependent RNA helicase DDX46 (Ddx46) from Mus musculus (Mouse).